The sequence spans 290 residues: N-acetylmannosamine kinase (290 aa).

ATP contacts are provided by residues 6–13 (ALDIGGTK) and 132–139 (GVGGGIIL). Zn(2+) is bound by residues H156, C166, C168, and C173.

The protein belongs to the ROK (NagC/XylR) family. NanK subfamily. As to quaternary structure, homodimer.

It catalyses the reaction an N-acyl-D-mannosamine + ATP = an N-acyl-D-mannosamine 6-phosphate + ADP + H(+). It participates in amino-sugar metabolism; N-acetylneuraminate degradation; D-fructose 6-phosphate from N-acetylneuraminate: step 2/5. Catalyzes the phosphorylation of N-acetylmannosamine (ManNAc) to ManNAc-6-P. In Yersinia pestis (strain Pestoides F), this protein is N-acetylmannosamine kinase.